Here is a 242-residue protein sequence, read N- to C-terminus: Pyr4-family terpene cyclase mfmH (242 aa).

Helical transmembrane passes span 25–45, 55–75, 80–100, and 116–136; these read VQDGLIICSGLCWTTAYILYI, GMPLVCLCANIAWEFLFGAAI, AQVVSFFPWFVIDIGIVYTTW, and NLGWILLGGIAGMLVMFWAFL. N-linked (GlcNAc...) asparagine glycosylation is present at Asn-170. Transmembrane regions (helical) follow at residues 175–195 and 211–231; these read SWGIWFTRWIGSVFAELIFVW and VTIFLFIVTEVADLTYPFVYA.

Belongs to the paxB family.

Its subcellular location is the membrane. It functions in the pathway secondary metabolite biosynthesis; terpenoid biosynthesis. Functionally, terpene cyclase; part of the gene cluster that mediates the biosynthesis of the phthalide-terpenoid hybrid 11'-O-desmethylfendlerol. Within the pathway, mfmH catalyzes the last step and cyclizes the prenyl unit of 5-O-farnesylcyclopolic acid into a drimane-like structure to yield 11'-O-desmethylfendlerol. The biosynthesis of 11'-O-desmethylfendlerol begins with the NR-PKS mfmB that forms 3,5-dimethylorsellinic acid (DMOA), which is then transformed into the phthalide 5,7-dihydroxy-4-(hydroxymethyl)-6-methylphthalide by the cytochrome P450 monooxygenase mfmA and the hydrolase mfmC. Subsequently, the methyltransferase mfmE catalyzes 7-O-methylation to yield 5-hydroxy-4-(hydroxymethyl)-7-methoxy-6-methylphthalide, which undergoes C-3 hydroxylation by the cytochrome P450 monooxygenase mfmF. The resultant cyclopolic acid (2,5-dihydroxy-4-(hydroxymethyl)-7-methoxy-6-methylphthalide) is then farnesylated by the DMATS-type prenyltransferase mfmD to afford 5-O-farnesylcyclopolic acid. Finally, the Pyr4-family terpene cyclase mfmH cyclizes the farnesyl moiety of 5-O-farnesylcyclopolic acid into a drimane-like structure, thus completing the biosynthesis of 11'-O-desmethylfendlerol. The chain is Pyr4-family terpene cyclase mfmH from Annulohypoxylon moriforme (Filamentous fungus).